The following is a 721-amino-acid chain: BRCA1-A complex subunit RAP80 (721 aa).

The interval 1–65 is disordered; sequence MPRRKKKGKE…GLQKTKIKQS (65 aa). A necessary for transcriptional repression region spans residues 1–101; it reads MPRRKKKGKE…SEQEAREVNS (101 aa). A Glycyl lysine isopeptide (Lys-Gly) (interchain with G-Cter in SUMO2) cross-link involves residue Lys20. Ser29 bears the Phosphoserine mark. Lys31 is covalently cross-linked (Glycyl lysine isopeptide (Lys-Gly) (interchain with G-Cter in SUMO2)). 2 positions are modified to phosphoserine: Ser44 and Ser46. Positions 60–78 match the LR motif motif; it reads TKIKQSSRAKCLAKRKIAQ. Glycyl lysine isopeptide (Lys-Gly) (interchain with G-Cter in SUMO2) cross-links involve residues Lys75 and Lys90. In terms of domain architecture, UIM 1 spans 80 to 99; it reads TEEEQFALALKMSEQEAREV. The segment at 93-204 is disordered; sequence EQEAREVNSQ…SVSSGSWDQS (112 aa). Residues 97 to 103 form a UIM-linker region; the sequence is REVNSQE. The necessary for interaction with NR6A1 N-terminus stretch occupies residues 100–200; the sequence is NSQEEEEEEL…EEPVSVSSGS (101 aa). Position 101 is a phosphoserine (Ser101). Positions 105 to 124 constitute a UIM 2 domain; sequence EEEELLRKAIAESLNSCRPS. A compositionally biased stretch (polar residues) spans 117 to 130; the sequence is SLNSCRPSDASATR. Position 140 is a phosphoserine (Ser140). Residues 194-204 are compositionally biased toward low complexity; that stretch reads VSVSSGSWDQS. Phosphoserine is present on Ser205. A Glycyl lysine isopeptide (Lys-Gly) (interchain with G-Cter in SUMO2) cross-link involves residue Lys245. Residues 270-400 form an AIR region; it reads TGGTVNYFWG…EEEPTTSHGQ (131 aa). Residues 334-369 are disordered; sequence NECGQGEQASEKNEGISEDMGDEDKEERQESRASVW. Residues 349–358 show a composition bias toward acidic residues; the sequence is ISEDMGDEDK. Glycyl lysine isopeptide (Lys-Gly) (interchain with G-Cter in SUMO2) cross-links involve residues Lys382 and Lys387. The segment at 391–418 is disordered; sequence EEEPTTSHGQSSQGLFVEETSEEGNSVP. Positions 400-500 are necessary for interaction with NR6A1 C-terminus; the sequence is QSSQGLFVEE…EIHTSTFSSS (101 aa). A phosphoserine mark is found at Ser402 and Ser420. Residue Lys429 forms a Glycyl lysine isopeptide (Lys-Gly) (interchain with G-Cter in SUMO2) linkage. Phosphoserine is present on Ser467. Residues 502-529 form a UBZ4-type zinc finger; sequence QVSCPLCDQGFPPTKIERHAMYCNGLMG. Zn(2+)-binding residues include Cys505, Cys508, His520, and Cys524. Positions 505–582 are zinc-finger-like region; it reads CPLCDQGFPP…REYQCHVESC (78 aa). Residues Lys544, Lys559, Lys562, and Lys607 each participate in a glycyl lysine isopeptide (Lys-Gly) (interchain with G-Cter in SUMO2) cross-link. Ser627 carries the phosphoserine modification. Glycyl lysine isopeptide (Lys-Gly) (interchain with G-Cter in SUMO2) cross-links involve residues Lys635 and Lys642. Ser655 and Ser679 each carry phosphoserine. Residues Lys698 and Lys699 each participate in a glycyl lysine isopeptide (Lys-Gly) (interchain with G-Cter in SUMO2) cross-link.

This sequence belongs to the RAP80 family. Component of the ARISC complex, at least composed of UIMC1/RAP80, ABRAXAS1, BRCC3/BRCC36, BABAM2 and BABAM1/NBA1. Component of the BRCA1-A complex, at least composed of the BRCA1, BARD1, UIMC1/RAP80, ABRAXAS1, BRCC3/BRCC36, BABAM2 and BABAM1/NBA1. In the BRCA1-A complex, interacts directly with ABRAXAS1. Interacts with UBE2I. Interacts with NR6A1. Interacts with ESR1. Interacts with TSP57. Interacts with TRAIP. In terms of processing, sumoylated. Phosphorylated upon DNA damage by ATM or ATR.

It is found in the nucleus. Its function is as follows. Ubiquitin-binding protein. Specifically recognizes and binds 'Lys-63'-linked ubiquitin. Plays a central role in the BRCA1-A complex by specifically binding 'Lys-63'-linked ubiquitinated histones H2A and H2AX at DNA lesions sites, leading to target the BRCA1-BARD1 heterodimer to sites of DNA damage at double-strand breaks (DSBs). The BRCA1-A complex also possesses deubiquitinase activity that specifically removes 'Lys-63'-linked ubiquitin on histones H2A and H2AX. Also weakly binds monoubiquitin but with much less affinity than 'Lys-63'-linked ubiquitin. May interact with monoubiquitinated histones H2A and H2B; the relevance of such results is however unclear in vivo. Does not bind Lys-48'-linked ubiquitin. May indirectly act as a transcriptional repressor by inhibiting the interaction of NR6A1 with the corepressor NCOR1. This Sus scrofa (Pig) protein is BRCA1-A complex subunit RAP80 (UIMC1).